The primary structure comprises 169 residues: Crossover junction endodeoxyribonuclease RuvC (169 aa).

Active-site residues include Asp-11, Glu-71, and His-143. Mg(2+)-binding residues include Asp-11, Glu-71, and His-143.

Belongs to the RuvC family. Homodimer which binds Holliday junction (HJ) DNA. The HJ becomes 2-fold symmetrical on binding to RuvC with unstacked arms; it has a different conformation from HJ DNA in complex with RuvA. In the full resolvosome a probable DNA-RuvA(4)-RuvB(12)-RuvC(2) complex forms which resolves the HJ. The cofactor is Mg(2+).

It is found in the cytoplasm. It catalyses the reaction Endonucleolytic cleavage at a junction such as a reciprocal single-stranded crossover between two homologous DNA duplexes (Holliday junction).. Functionally, the RuvA-RuvB-RuvC complex processes Holliday junction (HJ) DNA during genetic recombination and DNA repair. Endonuclease that resolves HJ intermediates. Cleaves cruciform DNA by making single-stranded nicks across the HJ at symmetrical positions within the homologous arms, yielding a 5'-phosphate and a 3'-hydroxyl group; requires a central core of homology in the junction. The consensus cleavage sequence is 5'-(A/T)TT(C/G)-3'. Cleavage occurs on the 3'-side of the TT dinucleotide at the point of strand exchange. HJ branch migration catalyzed by RuvA-RuvB allows RuvC to scan DNA until it finds its consensus sequence, where it cleaves and resolves the cruciform DNA. In Mesorhizobium japonicum (strain LMG 29417 / CECT 9101 / MAFF 303099) (Mesorhizobium loti (strain MAFF 303099)), this protein is Crossover junction endodeoxyribonuclease RuvC.